A 327-amino-acid polypeptide reads, in one-letter code: Polyprenyl transferase esdpC (327 aa).

8 helical membrane passes run 35–54, 73–93, 118–138, 140–160, 171–191, 202–222, 239–259, and 307–327; these read YNPL…AGAS, LLVF…NDWI, EALI…AYTL, GHNV…YPFG, YPQY…WLAI, IMES…LNTA, VYFL…ALVL, and ENFA…LLKS.

The protein belongs to the UbiA prenyltransferase family. The cofactor is Mg(2+).

The protein localises to the membrane. It functions in the pathway secondary metabolite biosynthesis; terpenoid biosynthesis. Functionally, olyprenyl transferase; part of the cluster that mediates the biosynthesis of shearones, diterpenoid pyrones (DPs) which are structurally diverse meroterpenoids consisting of a diterpene linked by a pyrone, and which may exhibit a range of bioactivities. Within the pathway, esdpC takes part to the biosynthesis of the molecular scaffold by catalyzing the C-3 geranylgeranylation reaction of the alpha-pyrone produced by esdpA. The molecular scaffold is commonly biosynthesized by a series of enzymes including the non-reducing polyketide synthase (NR-PKS) esdpA that generates an alpha-pyrone; the prenyltransferase esdpC that attaches a geranylgeranyl pyrophosphate (GGPP) produced by the GGPP synthase (GGPPS) esdpD onto the pyrone unit; the FAD-dependent monooxygenase esdpE that converts an olefin on the diterpene unit into an epoxide; and the terpene cyclase esdpB that catalyzes the cyclization reactions to give the molecular backbone shearone A. In the modification steps, esdpF oxidizes the hydroxy group to a ketone at C-3 and esdpG then attaches hydroxy groups at both C-11 and C-12. After that, esdpI hydroxylates at C-20 and esdpH hydroxylates at C-6'. The ether bridge is generated by nucleophilic attack of the hydroxy group at C-20 to the carbonyl carbon at C-3. EsdpH can also functions prior to esdpI. The different combinations of these modification enzymes lead to the production of diverse shearone derivatives, shearone I being the end product of the pathway. The alpha-ketoglutarate-dependent dioxygenase esdpJ seems not to be involved in this pathway. In Penicillium shearii (Eupenicillium shearii), this protein is Polyprenyl transferase esdpC.